A 151-amino-acid chain; its full sequence is Large ribosomal subunit protein bL9 (151 aa).

Belongs to the bacterial ribosomal protein bL9 family.

In terms of biological role, binds to the 23S rRNA. This is Large ribosomal subunit protein bL9 from Dehalococcoides mccartyi (strain ATCC BAA-2266 / KCTC 15142 / 195) (Dehalococcoides ethenogenes (strain 195)).